The following is a 552-amino-acid chain: Phosphoglucomutase (552 aa).

Serine 143 acts as the Phosphoserine intermediate in catalysis. Positions 143, 295, 297, and 299 each coordinate Mg(2+).

Belongs to the phosphohexose mutase family. It depends on Mg(2+) as a cofactor.

The catalysed reaction is alpha-D-glucose 1-phosphate = alpha-D-glucose 6-phosphate. It functions in the pathway glycolipid metabolism; diglucosyl-diacylglycerol biosynthesis. In terms of biological role, catalyzes the interconversion between glucose-6-phosphate and alpha-glucose-1-phosphate. This is the first step in the biosynthesis of diglucosyl-diacylglycerol (Glc2-DAG), i.e. the predominant glycolipid found in the S.aureus membrane, which is also used as a membrane anchor for lipoteichoic acid (LTA). This is Phosphoglucomutase (pgcA) from Staphylococcus aureus (strain USA300).